The following is a 308-amino-acid chain: tRNA dimethylallyltransferase (308 aa).

An ATP-binding site is contributed by glycine 9 to threonine 16. Residue threonine 11–threonine 16 coordinates substrate. Interaction with substrate tRNA regions lie at residues aspartate 34–glutamine 37 and glutamine 158–arginine 162.

This sequence belongs to the IPP transferase family. As to quaternary structure, monomer. It depends on Mg(2+) as a cofactor.

It catalyses the reaction adenosine(37) in tRNA + dimethylallyl diphosphate = N(6)-dimethylallyladenosine(37) in tRNA + diphosphate. Functionally, catalyzes the transfer of a dimethylallyl group onto the adenine at position 37 in tRNAs that read codons beginning with uridine, leading to the formation of N6-(dimethylallyl)adenosine (i(6)A). The chain is tRNA dimethylallyltransferase from Maricaulis maris (strain MCS10) (Caulobacter maris).